Reading from the N-terminus, the 1106-residue chain is Voltage-dependent calcium channel subunit alpha-2/delta-1 (1106 aa).

The first 26 residues, 1–26, serve as a signal peptide directing secretion; it reads MAAGRPLAWTLTLWQAWLILIGPSSE. Residues 27 to 1076 are Extracellular-facing; it reads EPFPSAVTIK…VLEDYTDCGG (1050 aa). N-linked (GlcNAc...) asparagine glycosylation occurs at asparagine 94. Phosphoserine is present on serine 121. Asparagine 138 and asparagine 186 each carry an N-linked (GlcNAc...) asparagine glycan. The VWFA domain occupies 255–432; the sequence is DMLILVDVSG…INTQEYLDVL (178 aa). The a divalent metal cation site is built by aspartate 261, serine 263, and serine 265. The short motif at 261–265 is the MIDAS-like motif element; the sequence is DVSGS. 2 N-linked (GlcNAc...) asparagine glycosylation sites follow: asparagine 326 and asparagine 350. The cysteines at positions 406 and 1062 are disulfide-linked. Residues 448–539 form the Cache domain; the sequence is WTNVYLDALE…QPKPIGVGIP (92 aa). N-linked (GlcNAc...) asparagine glycans are attached at residues asparagine 615, asparagine 784, and asparagine 891. Residues 1077–1097 traverse the membrane as a helical segment; sequence VSGLNPSLWSIIGIQFVLLWL. Residues 1098-1106 are Cytoplasmic-facing; the sequence is VSGSRHCLL.

The protein belongs to the calcium channel subunit alpha-2/delta family. As to quaternary structure, dimer formed of alpha-2-1 and delta-1 chains; disulfide-linked. Voltage-dependent calcium channels are multisubunit complexes, consisting of alpha-1 (CACNA1), alpha-2 (CACNA2D), beta (CACNB) and delta (CACNA2D) subunits in a 1:1:1:1 ratio. Proteolytically processed into subunits alpha-2-1 and delta-1 that are disulfide-linked. As to expression, skeletal muscle.

The protein localises to the membrane. It localises to the cell membrane. In terms of biological role, the alpha-2/delta subunit of voltage-dependent calcium channels regulates calcium current density and activation/inactivation kinetics of the calcium channel. Plays an important role in excitation-contraction coupling. The chain is Voltage-dependent calcium channel subunit alpha-2/delta-1 (CACNA2D1) from Oryctolagus cuniculus (Rabbit).